The chain runs to 268 residues: MDTLVIAGKSYTSRLLLGTGKYKDFTETRAAVDVSGTQIITVAIRRTNIGQNPDEPNLLDVLPPSQFTLLPNTAGCYTAADAVRTLRLARELLDGHALVKLEVLGDQKTLFPDVVATLEAARILVKDGFHVMVYTSDDPIVARQLEDIGCAAIMPLASLIGSGMGILNPWNLQIIIDKVKVPVIVDAGVGTASDAAIAMELGCDGVLMNTAVASARNPILMASAMRKAVEAGREAWLAGRMPKKIYQATPSSPSEGMITGSPHSAANN.

The Schiff-base intermediate with DXP role is filled by K100. Residues G161, 187–188 (AG), and 209–210 (NT) contribute to the 1-deoxy-D-xylulose 5-phosphate site. The segment at 248–268 (ATPSSPSEGMITGSPHSAANN) is disordered.

This sequence belongs to the ThiG family. In terms of assembly, homotetramer. Forms heterodimers with either ThiH or ThiS.

Its subcellular location is the cytoplasm. The enzyme catalyses [ThiS sulfur-carrier protein]-C-terminal-Gly-aminoethanethioate + 2-iminoacetate + 1-deoxy-D-xylulose 5-phosphate = [ThiS sulfur-carrier protein]-C-terminal Gly-Gly + 2-[(2R,5Z)-2-carboxy-4-methylthiazol-5(2H)-ylidene]ethyl phosphate + 2 H2O + H(+). The protein operates within cofactor biosynthesis; thiamine diphosphate biosynthesis. Its function is as follows. Catalyzes the rearrangement of 1-deoxy-D-xylulose 5-phosphate (DXP) to produce the thiazole phosphate moiety of thiamine. Sulfur is provided by the thiocarboxylate moiety of the carrier protein ThiS. In vitro, sulfur can be provided by H(2)S. The sequence is that of Thiazole synthase from Nitrosomonas eutropha (strain DSM 101675 / C91 / Nm57).